Consider the following 425-residue polypeptide: Histidine--tRNA ligase (425 aa).

The protein belongs to the class-II aminoacyl-tRNA synthetase family. As to quaternary structure, homodimer.

It is found in the cytoplasm. It carries out the reaction tRNA(His) + L-histidine + ATP = L-histidyl-tRNA(His) + AMP + diphosphate + H(+). This is Histidine--tRNA ligase from Buchnera aphidicola subsp. Baizongia pistaciae (strain Bp).